Reading from the N-terminus, the 258-residue chain is NAD kinase (258 aa).

The active-site Proton acceptor is the aspartate 51. NAD(+) is bound by residues aspartate 51–glycine 52, lysine 56, asparagine 119–aspartate 120, lysine 130, aspartate 149, threonine 160–serine 165, and alanine 184.

Belongs to the NAD kinase family. The cofactor is a divalent metal cation.

It is found in the cytoplasm. It carries out the reaction NAD(+) + ATP = ADP + NADP(+) + H(+). Functionally, involved in the regulation of the intracellular balance of NAD and NADP, and is a key enzyme in the biosynthesis of NADP. Catalyzes specifically the phosphorylation on 2'-hydroxyl of the adenosine moiety of NAD to yield NADP. This chain is NAD kinase, found in Thermotoga petrophila (strain ATCC BAA-488 / DSM 13995 / JCM 10881 / RKU-1).